The sequence spans 735 residues: Translation initiation factor IF-2, chloroplastic (735 aa).

Residues 239 to 411 enclose the tr-type G domain; the sequence is RRAPIVTILG…ILLMADIENY (173 aa). Positions 248–255 are G1; it reads GHVDHGKT. GTP is bound at residue 248–255; that stretch reads GHVDHGKT. A G2 region spans residues 273–277; sequence GITQK. Residues 298-301 form a G3 region; sequence DTPG. Residues 298 to 302 and 352 to 355 each bind GTP; these read DTPGH and NKID. Residues 352–355 form a G4 region; sequence NKID. The segment at 388–390 is G5; sequence SAS.

Belongs to the TRAFAC class translation factor GTPase superfamily. Classic translation factor GTPase family. IF-2 subfamily.

It localises to the plastid. It is found in the chloroplast. Its function is as follows. One of the essential components for the initiation of protein synthesis. Protects formylmethionyl-tRNA from spontaneous hydrolysis and promotes its binding to the 30S ribosomal subunits. Also involved in the hydrolysis of GTP during the formation of the 70S ribosomal complex. In Guillardia theta (Cryptophyte), this protein is Translation initiation factor IF-2, chloroplastic (infB).